Consider the following 492-residue polypeptide: Catalase-4 (492 aa).

Residues His65 and Asn138 contribute to the active site. Tyr348 is a binding site for heme.

This sequence belongs to the catalase family. Homotetramer. Requires heme as cofactor.

The protein resides in the peroxisome. It is found in the glyoxysome. It carries out the reaction 2 H2O2 = O2 + 2 H2O. Occurs in almost all aerobically respiring organisms and serves to protect cells from the toxic effects of hydrogen peroxide. This Glycine max (Soybean) protein is Catalase-4 (CAT4).